The sequence spans 466 residues: 23S rRNA (uracil(1939)-C(5))-methyltransferase RlmD (466 aa).

The region spanning 1-54 (MVDVLNIESLDLEARGIAHRDGKVLFVEGALPGERVTVQTVRRKPSYEIAKVEE) is the TRAM domain. C67, C73, C76, and C155 together coordinate [4Fe-4S] cluster. Positions 264, 293, 298, 314, 342, and 363 each coordinate S-adenosyl-L-methionine. The Nucleophile role is filled by C393.

Belongs to the class I-like SAM-binding methyltransferase superfamily. RNA M5U methyltransferase family. RlmD subfamily.

The catalysed reaction is uridine(1939) in 23S rRNA + S-adenosyl-L-methionine = 5-methyluridine(1939) in 23S rRNA + S-adenosyl-L-homocysteine + H(+). Catalyzes the formation of 5-methyl-uridine at position 1939 (m5U1939) in 23S rRNA. This Bordetella parapertussis (strain 12822 / ATCC BAA-587 / NCTC 13253) protein is 23S rRNA (uracil(1939)-C(5))-methyltransferase RlmD.